The chain runs to 104 residues: Large ribosomal subunit protein uL24 (104 aa).

The protein belongs to the universal ribosomal protein uL24 family. Part of the 50S ribosomal subunit.

Its function is as follows. One of two assembly initiator proteins, it binds directly to the 5'-end of the 23S rRNA, where it nucleates assembly of the 50S subunit. In terms of biological role, one of the proteins that surrounds the polypeptide exit tunnel on the outside of the subunit. This Corynebacterium aurimucosum (strain ATCC 700975 / DSM 44827 / CIP 107346 / CN-1) (Corynebacterium nigricans) protein is Large ribosomal subunit protein uL24.